The following is a 1364-amino-acid chain: Toxin subunit YenA2 (1364 aa).

Residues 1025-1080 (SESYRRRRQEWELQYKQAEWEVNSVEQQINLQNMQIKAANKRLEQVEAQQQQAMAL) adopt a coiled-coil conformation.

Semipurified toxin complex consists of at least YenA1-YenA2-YenB-YenC1-YenC2-Chi1-Chi2. The Yen-TC:K9 subcomplex is about 26 nm tall and 22 nm in diameter with 5-fold symmetry and 5 copies of YenA1, YenA2, Chi1 and Chi2; the chitinase subunits may be solvent accessible on the exterior the complex. The Yen-TC:K9 subcomplex has no insecticidal activity. The native complex with additional YenB, YenC1 and YenC2 subunits is 16 nm taller and is insecticidal; the toxicity-conferring subunits are present at about 1 copy each. In terms of processing, the isolated toxin complex includes 3 peptides starting between residues 768 and 778 of this protein, which might be physiologically relevant.

The protein resides in the secreted. Part of an orally active toxin complex (TC) with strong insecticidal effects on larvae of the Coleoptera Costelytra zealandica, Acrossidius tasmania and Adoryphorus couloni and some Lepidoptera larvae. The TC has an endochitinase activity. This chain is Toxin subunit YenA2, found in Yersinia entomophaga.